Here is a 428-residue protein sequence, read N- to C-terminus: MRVATQLRVGIVGGGWNGCHLALELKKQGHRVSLFEQKPDIFQGVSGNFGIRLHKGPHYPRSKATRDSCREALVKFCETYPELVVHHESAIYAHGEADALGNPSKVSDEAFRDVCYESPECTAVDPKANGFQGLISAYNLDEPSVAIGDRLRNTFKEKLGRAGIYVHLNATVDRIIHTEDTNRIQTGDGQYVFDVVINATGYTSLLPQNIADALPVDIGITYQTCIALVYEDQQPQEKPLSFIVMDGWFPCVMPAIDTNEPLQKKYILTHGSYTILGSFDRHEEGQELLDSLDEEAIAARIKPHCEREITRFWPGFLDRFQYRGWKGSVLAKLKTTSEFRSSLTFEKDGVIHIFPGKVSNVVTAAEEVVPLINDIARRRHGVVREWNGVRFTVSSAFHTHSKEIGDKPGLGEHHTSNLQTYVSLVTAN.

FAD-binding positions include 52-60 and 328-329; these read RLHKGPHYP and SV.

It belongs to the aromatic-ring hydroxylase family. Requires FAD as cofactor.

In terms of biological role, probable FAD-dependent monooxygenase; part of the gene cluster that mediates the biosynthesis of 5-hydroxy-2-hydroxymethyl-1,4-pyrone, also know as kojic acid, a by-product in the fermentation process of malting rice that acts as a chelation agent. Glucose might be converted to kojic acid by a combination of dehydrogenase and dehydratase reactions involving kojA and probably additional enzymes. This chain is FAD-dependent monooxygenase kojA, found in Aspergillus flavus (strain ATCC 200026 / FGSC A1120 / IAM 13836 / NRRL 3357 / JCM 12722 / SRRC 167).